The chain runs to 1036 residues: Histidine kinase 3 (1036 aa).

At 1–8 the chain is on the extracellular side; that stretch reads MSLFHVLG. Residues 9 to 29 traverse the membrane as a helical segment; sequence FGVKIGHLFWMLCCWFVSWFV. The Cytoplasmic portion of the chain corresponds to 30-94; it reads DNGIEDKSGL…VKFNKAWWRK (65 aa). The chain crosses the membrane as a helical span at residues 95-115; sequence LVVVWVVFWVLVSIWTFWYFS. The Extracellular segment spans residues 116-399; that stretch reads SQAMEKRKET…CRFKQKPPWP (284 aa). A CHASE domain is found at 163–389; sequence IPSAIDQRTF…GDPLRKHEMR (227 aa). A helical transmembrane segment spans residues 400–420; sequence VLSMVTSFGILVIALLVAHII. At 421-1036 the chain is on the cytoplasmic side; that stretch reads HATVSRIHKV…FFNSPSDTES (616 aa). One can recognise a Histidine kinase domain in the interval 457 to 723; that stretch reads TVSHEIRTPM…TFTFTAVFSN (267 aa). Residue His460 is modified to Phosphohistidine; by autocatalysis. 2 Response regulatory domains span residues 746-865 and 891-1028; these read KAVV…QRGL and KILI…SRFF. Residue Asp941 is modified to 4-aspartylphosphate.

In terms of assembly, interacts with AHK2, AHK4, AHP1, AHP2, AHP3, AHP5 and At5g43560. In terms of processing, autophosphorylated predominantly on His residues. Activation probably requires a transfer of a phosphate group between a His in the transmitter domain and an Asp of the receiver domain. In terms of tissue distribution, mostly expressed in leaves and flowers, and, to a lower extent, in roots, stems, and siliques, especially in the vascular tissues. Present in seedlings.

It localises to the cell membrane. The protein resides in the endoplasmic reticulum membrane. It carries out the reaction ATP + protein L-histidine = ADP + protein N-phospho-L-histidine.. Its activity is regulated as follows. Activated by cytokinins to initiate phosphorelay signaling. This cytokinin-mediated activation is repressed by the trans-zeatin antagonists 6-(2-hydroxy-3-methylbenzylamino)purine (PI-55) and 6-(2,5-Dihydroxybenzylamino)purine (LGR-991). Cytokinins (CK) receptor related to bacterial two-component regulators. Functions as a histidine kinase and transmits the stress signal to a downstream MAPK cascade. This protein undergoes an ATP-dependent autophosphorylation at a conserved histidine residue in the kinase core, and a phosphoryl group is then transferred to a conserved aspartate residue in the receiver domain. In the presence of cytokinin, feeds phosphate to phosphorelay-integrating histidine phosphotransfer protein (HPt) and activates subsequent cascade. Involved in meristems establishment in seedlings. Redundant negative regulator of drought and salt stress responses and abscisic acid (ABA) signaling. Together with AHK2, plays a negative regulatory role in cold stress signaling via inhibition of ABA response, occurring independently of the cold acclimation pathway. Redundant positive regulator of cytokinin signaling that regulates many developmental processes including seed germination, cell division, seed size, chlorophyll retention during leaf senescence, root repression and shoot promotion. Can interact with isoprenoid-type cytokinins trans-zeatin (tZ and tZR), cis-zeatin (cZ), dihydrozeatin (DZ), buta-2,3-dienyladenine (HA-8), penta-2,3-dienyladenine (HA-1), 4-methyl-penta-2,3-dienyladenine (HA-10), 4-hydroxy-2-butynyladenine (RM1), 2-propynyladenine (RM3), 2-butynyladenine (RM6), and cytokinin ribosides and ribotides. Together with AHK4, involved in the cytokinin-dependent responses to Pi starvation and sucrose stresses. Promotes cytokinin-mediated leaf longevity through a specific phosphorylation of the response regulator ARR2. Involved in alkamides (e.g. N-isobutyl decanamide) and N-acylethanolamides (NAE) signaling that control meristematic activity and differentiation processes during plant development. Contributes to vascular bundle formation and secondary growth in a cytokinin-dependent manner, probably by promoting the maintenance of mitotic activity and/or identity of procambial cells. Plays a role in the cytokinin-mediated repression of the iron uptake pathway. Required by the cytokinin-dependent flower development regulation pathway. This Arabidopsis thaliana (Mouse-ear cress) protein is Histidine kinase 3 (AHK3).